Here is a 392-residue protein sequence, read N- to C-terminus: Phosphoglycerate kinase (392 aa).

Substrate is bound by residues 19 to 21 (DFN), R35, 58 to 61 (HMGR), R117, and R150. ATP is bound by residues K201, E323, and 349-352 (GGDS).

Belongs to the phosphoglycerate kinase family. As to quaternary structure, monomer.

The protein localises to the cytoplasm. The enzyme catalyses (2R)-3-phosphoglycerate + ATP = (2R)-3-phospho-glyceroyl phosphate + ADP. It participates in carbohydrate degradation; glycolysis; pyruvate from D-glyceraldehyde 3-phosphate: step 2/5. The sequence is that of Phosphoglycerate kinase from Desulfotalea psychrophila (strain LSv54 / DSM 12343).